Consider the following 296-residue polypeptide: Cobalamin trafficking protein CblD (296 aa).

A mitochondrion-targeting transit peptide spans 1–38 (MANVLCNRARLVSYLPGFCSLVKRVVNPKAFSTAGSSG). Lys-203 is modified (N6-acetyllysine).

In terms of assembly, heterodimer with MMACHC. Forms a multiprotein complex with MMACHC, MTR and MTRR. As to expression, widely expressed at high levels.

Its subcellular location is the cytoplasm. It is found in the mitochondrion. Its function is as follows. Involved in cobalamin metabolism and trafficking. Plays a role in regulating the biosynthesis and the proportion of two coenzymes, methylcob(III)alamin (MeCbl) and 5'-deoxyadenosylcobalamin (AdoCbl). Promotes oxidation of cob(II)alamin bound to MMACHC. The processing of cobalamin in the cytosol occurs in a multiprotein complex composed of at least MMACHC, MMADHC, MTRR (methionine synthase reductase) and MTR (methionine synthase) which may contribute to shuttle safely and efficiently cobalamin towards MTR in order to produce methionine. This chain is Cobalamin trafficking protein CblD, found in Homo sapiens (Human).